The sequence spans 745 residues: Single-minded homolog 1-A (745 aa).

Residues M1–R53 enclose the bHLH domain. PAS domains lie at G77–H147 and P218–G288. A Single-minded C-terminal domain is found at E336–S745. Over residues T350 to T364 the composition is skewed to polar residues. Disordered regions lie at residues T350–S413 and E529–K563. Residues R368–S387 carry the Nuclear localization signal motif. Residues V369–T381 show a composition bias toward basic residues. Low complexity predominate over residues A532–D544.

As to quaternary structure, efficient DNA binding requires dimerization with another bHLH protein. Heterodimer of sim1a and arnt. In terms of tissue distribution, expressed in embryonic forebrain at the eleven somite stage. Detected in brain throughout embryonic development.

It localises to the nucleus. Its function is as follows. Transcriptional factor that may have pleiotropic effects during embryogenesis and in the adult. The sequence is that of Single-minded homolog 1-A (sim1a) from Danio rerio (Zebrafish).